The following is a 595-amino-acid chain: Sorting nexin-9 (595 aa).

The 62-residue stretch at 1 to 62 (MATKARVMYD…PTDYVEILPS (62 aa)) folds into the SH3 domain. The segment at 91–201 (SSSAASNNHQ…GNSRASSSSM (111 aa)) is disordered. Composition is skewed to polar residues over residues 111 to 121 (WSASKSGNWES) and 135 to 145 (QRNTNTPNNWD). Phosphoserine is present on residues S116 and S121. Over residues 160 to 169 (GDDDDWDEDW) the composition is skewed to acidic residues. Over residues 191–201 (RGNSRASSSSM) the composition is skewed to polar residues. Phosphoserine is present on residues S197 and S200. The segment at 201–213 (MKIPLNKFPGFAK) is critical for tubulation activity. T216 is subject to Phosphothreonine. Y239 bears the Phosphotyrosine mark. A PX domain is found at 250–361 (FDCVVADPRK…QFLNFRDEKE (112 aa)). 3 residues coordinate a 1,2-diacyl-sn-glycero-3-phospho-(1D-myo-inositol-4,5-bisphosphate): R286, K288, and R327. K288 carries the N6-acetyllysine modification. The 204-residue stretch at 392–595 (LVEIEQKCEA…RQALSRFPVM (204 aa)) folds into the BAR domain.

Belongs to the sorting nexin family. As to quaternary structure, homodimer, and homooligomer. Heterodimer with SNX18. Interacts with ITCH. Interacts (via SH3 domain) with TNK2, WASL and ACTR3. Identified in a complex with TNK2 and clathrin heavy chains. Identified in a complex with the AP-2 complex, clathrin and DNM2. Interacts (via SH3 domain) with DNM1 and DNM2. Identified in an oligomeric complex containing DNM1 and SNX9. Interacts with FCHSD1. Interacts with ADAM9 and ADAM15 cytoplasmic tails. Post-translationally, ubiquitinated by ITCH. In terms of processing, phosphorylated on tyrosine residues by TNK2. Phosphorylation promotes its activity in the degradation of EGFR. As to expression, widely expressed, with highest levels in heart and placenta, and lowest levels in thymus and peripheral blood leukocytes.

It is found in the cytoplasmic vesicle membrane. Its subcellular location is the cell membrane. The protein resides in the cytoplasmic vesicle. The protein localises to the clathrin-coated vesicle. It localises to the golgi apparatus. It is found in the trans-Golgi network. Its subcellular location is the cell projection. The protein resides in the ruffle. The protein localises to the cytoplasm. Involved in endocytosis and intracellular vesicle trafficking, both during interphase and at the end of mitosis. Required for efficient progress through mitosis and cytokinesis. Required for normal formation of the cleavage furrow at the end of mitosis. Plays a role in endocytosis via clathrin-coated pits, but also clathrin-independent, actin-dependent fluid-phase endocytosis. Plays a role in macropinocytosis. Promotes internalization of TNFR. Promotes degradation of EGFR after EGF signaling. Stimulates the GTPase activity of DNM1. Promotes DNM1 oligomerization. Promotes activation of the Arp2/3 complex by WASL, and thereby plays a role in the reorganization of the F-actin cytoskeleton. Binds to membranes enriched in phosphatidylinositol 4,5-bisphosphate and promotes membrane tubulation. Has lower affinity for membranes enriched in phosphatidylinositol 3-phosphate. The protein is Sorting nexin-9 (SNX9) of Homo sapiens (Human).